The chain runs to 458 residues: MNKDFNEFKKFIYNKKVAIIGLGISNMPLVEFLSNLGARVTGFDKKNENELENNINELKAKGVNFELGENYLDKLSNFDVVFRTPSMRTDHPILIKAKSEGAYITSEMEEFIKYCPAKLFCITGSDGKTTTTTLIYNILKTEGYTVWVGGNIGNPLFTKIEEIKKDDKVVLELSSFQLMSIKEPIEVALVTNVSPNHLDIHKDMEEYIKAKKNIFKYQRENDLLVINEDNKITKSMEEECRGRLLKFSMKEKLKEGSFYYNEDLYINEKKVCNVSEVKLKGMHNVENLLAAFSCVSEDSSIDSMREVAKNFNGVEHRLEFVKEIQEVKYFNDSIASSPTRTLAALQSFDRPVILIAGGYDKKISFEVLAKEGISHIKHLILLGDTKYKIEEAFKKVMRDSSEDLPISICNSIEEAINIAKENGESGDVVTLSPACASFDMFKNFEERGNKFKSIIRNL.

124 to 130 (GSDGKTT) provides a ligand contact to ATP.

It belongs to the MurCDEF family.

Its subcellular location is the cytoplasm. It carries out the reaction UDP-N-acetyl-alpha-D-muramoyl-L-alanine + D-glutamate + ATP = UDP-N-acetyl-alpha-D-muramoyl-L-alanyl-D-glutamate + ADP + phosphate + H(+). It functions in the pathway cell wall biogenesis; peptidoglycan biosynthesis. Cell wall formation. Catalyzes the addition of glutamate to the nucleotide precursor UDP-N-acetylmuramoyl-L-alanine (UMA). In Clostridium tetani (strain Massachusetts / E88), this protein is UDP-N-acetylmuramoylalanine--D-glutamate ligase.